Consider the following 288-residue polypeptide: Ninja-family protein 6 (288 aa).

Disordered stretches follow at residues 1–50 and 66–207; these read MASR…KRPR and LHAD…TRTG. The span at 12-23 shows a compositional bias: gly residues; it reads AGEGAGPPGDAG. Positions 76–86 are enriched in low complexity; sequence LPLLRTTSLPT. Basic and acidic residues predominate over residues 91–103; sequence ERWRRREMQSRRR. Residues 131–173 are compositionally biased toward polar residues; the sequence is RRSNASQGSNSASTTEQGIGGSMFNQSADAKSPSTSDNRNQND. Low complexity predominate over residues 195–207; the sequence is RLRTLGSLTTRTG.

Belongs to the Ninja family.

Its subcellular location is the nucleus. This Zea mays (Maize) protein is Ninja-family protein 6.